A 360-amino-acid polypeptide reads, in one-letter code: Phenylalanine--tRNA ligase alpha subunit (360 aa).

Glu260 provides a ligand contact to Mg(2+).

This sequence belongs to the class-II aminoacyl-tRNA synthetase family. Phe-tRNA synthetase alpha subunit type 1 subfamily. As to quaternary structure, tetramer of two alpha and two beta subunits. Mg(2+) serves as cofactor.

It localises to the cytoplasm. It carries out the reaction tRNA(Phe) + L-phenylalanine + ATP = L-phenylalanyl-tRNA(Phe) + AMP + diphosphate + H(+). The sequence is that of Phenylalanine--tRNA ligase alpha subunit from Rhodopseudomonas palustris (strain BisB5).